Reading from the N-terminus, the 450-residue chain is Phosphoglucosamine mutase (450 aa).

Catalysis depends on Ser101, which acts as the Phosphoserine intermediate. Residues Ser101, Asp240, Asp242, and Asp244 each coordinate Mg(2+). At Ser101 the chain carries Phosphoserine.

This sequence belongs to the phosphohexose mutase family. Mg(2+) is required as a cofactor. Post-translationally, activated by phosphorylation.

It carries out the reaction alpha-D-glucosamine 1-phosphate = D-glucosamine 6-phosphate. In terms of biological role, catalyzes the conversion of glucosamine-6-phosphate to glucosamine-1-phosphate. In Streptococcus pneumoniae (strain Hungary19A-6), this protein is Phosphoglucosamine mutase.